Here is a 452-residue protein sequence, read N- to C-terminus: Tubulin alpha-1 chain (452 aa).

Position 11 (glutamine 11) interacts with GTP. An N6-acetyllysine modification is found at lysine 40. 7 residues coordinate GTP: glutamate 71, serine 140, glycine 144, threonine 145, threonine 179, asparagine 206, and asparagine 228. Glutamate 71 serves as a coordination point for Mg(2+). Glutamate 254 is a catalytic residue. The disordered stretch occupies residues glutamate 433–tyrosine 452.

It belongs to the tubulin family. Dimer of alpha and beta chains. A typical microtubule is a hollow water-filled tube with an outer diameter of 25 nm and an inner diameter of 15 nM. Alpha-beta heterodimers associate head-to-tail to form protofilaments running lengthwise along the microtubule wall with the beta-tubulin subunit facing the microtubule plus end conferring a structural polarity. Microtubules usually have 13 protofilaments but different protofilament numbers can be found in some organisms and specialized cells. The cofactor is Mg(2+). Post-translationally, undergoes a tyrosination/detyrosination cycle, the cyclic removal and re-addition of a C-terminal tyrosine residue by the enzymes tubulin tyrosine carboxypeptidase (TTCP) and tubulin tyrosine ligase (TTL), respectively. Acetylation of alpha chains at Lys-40 stabilizes microtubules and affects affinity and processivity of microtubule motors. This modification has a role in multiple cellular functions, ranging from cell motility, cell cycle progression or cell differentiation to intracellular trafficking and signaling.

It localises to the cytoplasm. The protein localises to the cytoskeleton. The catalysed reaction is GTP + H2O = GDP + phosphate + H(+). Functionally, tubulin is the major constituent of microtubules, a cylinder consisting of laterally associated linear protofilaments composed of alpha- and beta-tubulin heterodimers. Microtubules grow by the addition of GTP-tubulin dimers to the microtubule end, where a stabilizing cap forms. Below the cap, tubulin dimers are in GDP-bound state, owing to GTPase activity of alpha-tubulin. This chain is Tubulin alpha-1 chain, found in Paracentrotus lividus (Common sea urchin).